The chain runs to 179 residues: ATP synthase subunit b (179 aa).

The chain crosses the membrane as a helical span at residues 29–48; sequence VINLAILIGVLVYFGRGVLG.

Belongs to the ATPase B chain family. F-type ATPases have 2 components, F(1) - the catalytic core - and F(0) - the membrane proton channel. F(1) has five subunits: alpha(3), beta(3), gamma(1), delta(1), epsilon(1). F(0) has four main subunits: a(1), b(1), b'(1) and c(10-14). The alpha and beta chains form an alternating ring which encloses part of the gamma chain. F(1) is attached to F(0) by a central stalk formed by the gamma and epsilon chains, while a peripheral stalk is formed by the delta, b and b' chains.

It localises to the cellular thylakoid membrane. Functionally, f(1)F(0) ATP synthase produces ATP from ADP in the presence of a proton or sodium gradient. F-type ATPases consist of two structural domains, F(1) containing the extramembraneous catalytic core and F(0) containing the membrane proton channel, linked together by a central stalk and a peripheral stalk. During catalysis, ATP synthesis in the catalytic domain of F(1) is coupled via a rotary mechanism of the central stalk subunits to proton translocation. Its function is as follows. Component of the F(0) channel, it forms part of the peripheral stalk, linking F(1) to F(0). The complex from the organism is particularly stable to disruption and remains functional after 6 hrs at 55 degrees Celsius. The chain is ATP synthase subunit b from Thermosynechococcus vestitus (strain NIES-2133 / IAM M-273 / BP-1).